Here is a 61-residue protein sequence, read N- to C-terminus: Small ribosomal subunit protein uS14 (61 aa).

Zn(2+) is bound by residues Cys-24, Cys-27, Cys-40, and Cys-43.

It belongs to the universal ribosomal protein uS14 family. Zinc-binding uS14 subfamily. As to quaternary structure, part of the 30S ribosomal subunit. Contacts proteins S3 and S10. Zn(2+) serves as cofactor.

Functionally, binds 16S rRNA, required for the assembly of 30S particles and may also be responsible for determining the conformation of the 16S rRNA at the A site. The sequence is that of Small ribosomal subunit protein uS14 from Mycoplasmopsis pulmonis (strain UAB CTIP) (Mycoplasma pulmonis).